The chain runs to 689 residues: Glycine--tRNA ligase beta subunit (689 aa).

Belongs to the class-II aminoacyl-tRNA synthetase family. As to quaternary structure, tetramer of two alpha and two beta subunits.

It localises to the cytoplasm. It catalyses the reaction tRNA(Gly) + glycine + ATP = glycyl-tRNA(Gly) + AMP + diphosphate. The sequence is that of Glycine--tRNA ligase beta subunit from Actinobacillus succinogenes (strain ATCC 55618 / DSM 22257 / CCUG 43843 / 130Z).